The sequence spans 722 residues: Dipeptidyl aminopeptidase BII (722 aa).

The N-terminal stretch at 1–24 (MRPNLLAAAIAVPLSLLAAQIAQA) is a signal peptide. 2 disulfides stabilise this stretch: cysteine 70–cysteine 87 and cysteine 166–cysteine 174. Histidine 86 acts as the Charge relay system in catalysis. 215 to 216 (NW) contacts substrate. Aspartate 224 (charge relay system) is an active-site residue. Substrate contacts are provided by residues asparagine 330, 655–657 (GNS), and 673–674 (FD). Residue serine 657 is the Charge relay system of the active site.

The protein belongs to the peptidase S46 family. As to quaternary structure, homodimer.

Completely inhibited by the serine protease inhibitor diisopropyl fluorophosphate (DFP) and potently inhibited by 0.5 mM ZnCl(2), 10 mM o-phenanthlorine, phenylmethanesulfonyl fluoride (PMSF) and N-tosyl-L-phenyl-alanyl chloromethyl ketone (TPCK), but not by N-tosyl-L-lysyl chloromethyl ketone (TLCK). Activity is not affected significantly by protease inhibitors, such as chymostatin, leupeptin, N-ethylmaleimide (NEM), iodoacetate (IAA), L-trans-epoxysuccinyl-leucylamido(4-guanido)butane (E64) and pepstatin A or by CoCl(2), CaCl(2) and EDTA. Its function is as follows. Exopeptidase that catalyzes the removal of dipeptide units (NH2-P2-P1-) from the free amino termini of oligopeptides and small proteins. Peptide digestion is sequential and substrate recognition is non-specific, with the exception that Pro is not suitable as a P1 residue. Removes many residues of bioactive oligopeptides such as angiotensin I and neuromedin N and also cleaves oxidized insulin B chain. Able to hydrolyze an X-Pro bond, an imido bond. No endopeptidase activity. May play a physiological role in feeding. This is Dipeptidyl aminopeptidase BII from Pseudoxanthomonas mexicana.